We begin with the raw amino-acid sequence, 138 residues long: Ribulose bisphosphate carboxylase small subunit (138 aa).

Belongs to the RuBisCO small chain family. In terms of assembly, heterohexadecamer of 8 large and 8 small subunits.

The protein resides in the plastid. Its subcellular location is the chloroplast. Functionally, ruBisCO catalyzes two reactions: the carboxylation of D-ribulose 1,5-bisphosphate, the primary event in carbon dioxide fixation, as well as the oxidative fragmentation of the pentose substrate in the photorespiration process. Both reactions occur simultaneously and in competition at the same active site. Although the small subunit is not catalytic it is essential for maximal activity. The polypeptide is Ribulose bisphosphate carboxylase small subunit (Porphyra purpurea (Red seaweed)).